Consider the following 230-residue polypeptide: MAGKENNFPPLPPFLPLKPCFYQDFSDEIPVEHQVLVKRIYRLWMFYCATLGVNLVACLAWWIAGGAGANFGLALLWLVLFTPCSYVCWFRPAYKAFRADSSFNFMTFFFIFGAQFVLTVIQAIGFSGWGACGWLAAVGFFGTSVGAAVVMLVPAILFSLSALVMAVTIVKVHRIYRGAGGSLQKAQTEWSAGTWRNPPSREAQFNSFSGNSLPEYPTVPSYSSSGGHWP.

The Cytoplasmic portion of the chain corresponds to 1–39 (MAGKENNFPPLPPFLPLKPCFYQDFSDEIPVEHQVLVKR). The next 4 membrane-spanning stretches (helical) occupy residues 40-60 (IYRL…ACLA), 61-81 (WWIA…LVLF), 106-126 (MTFF…AIGF), and 149-169 (VVML…AVTI). Over 170–230 (VKVHRIYRGA…SYSSSGGHWP (61 aa)) the chain is Cytoplasmic. T194 carries the phosphothreonine modification.

It belongs to the SCAMP family.

It localises to the membrane. In terms of biological role, probably involved in membrane protein trafficking. This chain is Secretory carrier-associated membrane protein 4 (Scamp4), found in Mus musculus (Mouse).